Consider the following 433-residue polypeptide: Protein RETICULATA-RELATED 1, chloroplastic (433 aa).

The N-terminal 63 residues, 1–63 (MSISLKISHI…LSSRNLRNRC (63 aa)), are a transit peptide targeting the chloroplast. V64 bears the N-acetylvaline mark. The span at 93 to 105 (DLEPELDDGDGGD) shows a compositional bias: acidic residues. The disordered stretch occupies residues 93–143 (DLEPELDDGDGGDENGNNDGGGNGGNGDGGGGGGDGEGDDGEDEADKAEEK). Positions 110-127 (NDGGGNGGNGDGGGGGGD) are enriched in gly residues. The segment covering 128-139 (GEGDDGEDEADK) has biased composition (acidic residues). The next 2 membrane-spanning stretches (helical) occupy residues 249–269 (LYAA…GLLA) and 323–343 (LLYG…ANLI).

This sequence belongs to the RETICULATA family. In terms of tissue distribution, expressed in root vasculature, distal region of young leaf primordia, leaf bundle sheath cells, hydathodes and pollen grains.

It is found in the plastid. The protein localises to the chloroplast membrane. Its function is as follows. May play a role in leaf development. The polypeptide is Protein RETICULATA-RELATED 1, chloroplastic (Arabidopsis thaliana (Mouse-ear cress)).